Reading from the N-terminus, the 328-residue chain is Ketol-acid reductoisomerase (NADP(+)) (328 aa).

Positions 1 to 181 (MKIYYENDID…GLARAGVLET (181 aa)) constitute a KARI N-terminal Rossmann domain. NADP(+) contacts are provided by residues 24 to 27 (YGSQ), arginine 47, serine 52, and 82 to 85 (DEIQ). The active site involves histidine 107. Glycine 133 serves as a coordination point for NADP(+). The 146-residue stretch at 182–327 (TFREETETDL…SKLRKLCGLE (146 aa)) folds into the KARI C-terminal knotted domain. Mg(2+) is bound by residues aspartate 190, glutamate 194, glutamate 226, and glutamate 230. Serine 251 serves as a coordination point for substrate.

The protein belongs to the ketol-acid reductoisomerase family. It depends on Mg(2+) as a cofactor.

The catalysed reaction is (2R)-2,3-dihydroxy-3-methylbutanoate + NADP(+) = (2S)-2-acetolactate + NADPH + H(+). The enzyme catalyses (2R,3R)-2,3-dihydroxy-3-methylpentanoate + NADP(+) = (S)-2-ethyl-2-hydroxy-3-oxobutanoate + NADPH + H(+). It functions in the pathway amino-acid biosynthesis; L-isoleucine biosynthesis; L-isoleucine from 2-oxobutanoate: step 2/4. It participates in amino-acid biosynthesis; L-valine biosynthesis; L-valine from pyruvate: step 2/4. Functionally, involved in the biosynthesis of branched-chain amino acids (BCAA). Catalyzes an alkyl-migration followed by a ketol-acid reduction of (S)-2-acetolactate (S2AL) to yield (R)-2,3-dihydroxy-isovalerate. In the isomerase reaction, S2AL is rearranged via a Mg-dependent methyl migration to produce 3-hydroxy-3-methyl-2-ketobutyrate (HMKB). In the reductase reaction, this 2-ketoacid undergoes a metal-dependent reduction by NADPH to yield (R)-2,3-dihydroxy-isovalerate. This is Ketol-acid reductoisomerase (NADP(+)) from Methanothermobacter thermautotrophicus (strain ATCC 29096 / DSM 1053 / JCM 10044 / NBRC 100330 / Delta H) (Methanobacterium thermoautotrophicum).